Reading from the N-terminus, the 189-residue chain is Elongation factor P 2 (189 aa).

This sequence belongs to the elongation factor P family.

The protein localises to the cytoplasm. It functions in the pathway protein biosynthesis; polypeptide chain elongation. Functionally, involved in peptide bond synthesis. Stimulates efficient translation and peptide-bond synthesis on native or reconstituted 70S ribosomes in vitro. Probably functions indirectly by altering the affinity of the ribosome for aminoacyl-tRNA, thus increasing their reactivity as acceptors for peptidyl transferase. The polypeptide is Elongation factor P 2 (efp2) (Lactobacillus johnsonii (strain CNCM I-12250 / La1 / NCC 533)).